The sequence spans 366 residues: Phenylalanine--tRNA ligase alpha subunit (366 aa).

Residue Glu-264 coordinates Mg(2+).

This sequence belongs to the class-II aminoacyl-tRNA synthetase family. Phe-tRNA synthetase alpha subunit type 1 subfamily. Tetramer of two alpha and two beta subunits. Mg(2+) serves as cofactor.

It is found in the cytoplasm. It carries out the reaction tRNA(Phe) + L-phenylalanine + ATP = L-phenylalanyl-tRNA(Phe) + AMP + diphosphate + H(+). In Zymomonas mobilis subsp. mobilis (strain ATCC 31821 / ZM4 / CP4), this protein is Phenylalanine--tRNA ligase alpha subunit.